Reading from the N-terminus, the 447-residue chain is N-succinylarginine dihydrolase (447 aa).

Substrate contacts are provided by residues 19–28 (AGLSFGNEAS), Asn-110, and 137–138 (HR). The active site involves Glu-174. Arg-212 is a substrate binding site. His-248 is a catalytic residue. Substrate is bound by residues Asp-250 and Asn-359. Residue Cys-365 is the Nucleophile of the active site.

It belongs to the succinylarginine dihydrolase family. In terms of assembly, homodimer.

The enzyme catalyses N(2)-succinyl-L-arginine + 2 H2O + 2 H(+) = N(2)-succinyl-L-ornithine + 2 NH4(+) + CO2. The protein operates within amino-acid degradation; L-arginine degradation via AST pathway; L-glutamate and succinate from L-arginine: step 2/5. Functionally, catalyzes the hydrolysis of N(2)-succinylarginine into N(2)-succinylornithine, ammonia and CO(2). In Escherichia coli O7:K1 (strain IAI39 / ExPEC), this protein is N-succinylarginine dihydrolase.